We begin with the raw amino-acid sequence, 339 residues long: Bifunctional protein GlmU (339 aa).

Residues 1–234 form a pyrophosphorylase region; it reads MKKENPLAIV…PKDVLGVNSR (234 aa). UDP-N-acetyl-alpha-D-glucosamine is bound by residues 12–15, K26, Q77, and 82–83; these read LAAG and GT. D107 lines the Mg(2+) pocket. G144, E159, N174, and N232 together coordinate UDP-N-acetyl-alpha-D-glucosamine. N232 provides a ligand contact to Mg(2+). A linker region spans residues 235–255; that stretch reads IELAMADEELRMRRNREVMLT. The segment at 256–339 is N-acetyltransferase; it reads GVSMILPATI…KIPAQQREEE (84 aa).

It belongs to the N-acetylglucosamine-1-phosphate uridyltransferase family. As to quaternary structure, homotrimer. Mg(2+) is required as a cofactor.

It is found in the cytoplasm. The enzyme catalyses alpha-D-glucosamine 1-phosphate + acetyl-CoA = N-acetyl-alpha-D-glucosamine 1-phosphate + CoA + H(+). It catalyses the reaction N-acetyl-alpha-D-glucosamine 1-phosphate + UTP + H(+) = UDP-N-acetyl-alpha-D-glucosamine + diphosphate. The protein operates within nucleotide-sugar biosynthesis; UDP-N-acetyl-alpha-D-glucosamine biosynthesis; N-acetyl-alpha-D-glucosamine 1-phosphate from alpha-D-glucosamine 6-phosphate (route II): step 2/2. It functions in the pathway nucleotide-sugar biosynthesis; UDP-N-acetyl-alpha-D-glucosamine biosynthesis; UDP-N-acetyl-alpha-D-glucosamine from N-acetyl-alpha-D-glucosamine 1-phosphate: step 1/1. It participates in bacterial outer membrane biogenesis; LPS lipid A biosynthesis. In terms of biological role, catalyzes the last two sequential reactions in the de novo biosynthetic pathway for UDP-N-acetylglucosamine (UDP-GlcNAc). The C-terminal domain catalyzes the transfer of acetyl group from acetyl coenzyme A to glucosamine-1-phosphate (GlcN-1-P) to produce N-acetylglucosamine-1-phosphate (GlcNAc-1-P), which is converted into UDP-GlcNAc by the transfer of uridine 5-monophosphate (from uridine 5-triphosphate), a reaction catalyzed by the N-terminal domain. The sequence is that of Bifunctional protein GlmU (glmU) from Desulfotalea psychrophila (strain LSv54 / DSM 12343).